Here is a 552-residue protein sequence, read N- to C-terminus: Nucleolar complex protein 4 (552 aa).

Belongs to the CBF/MAK21 family. As to quaternary structure, interacts with NOP14 and MPP10. Interacts with snoRNA U3. Component of the ribosomal small subunit (SSU) processome composed of at least 40 protein subunits and snoRNA U3.

It is found in the nucleus. Its subcellular location is the nucleolus. Functionally, involved in nucleolar processing of pre-18S ribosomal RNA and ribosome assembly. Has a role in the nuclear export of 40S pre-ribosomal subunit to the cytoplasm. Its subcellular location and association with pre-40S subunit are unaffected by RPS19 disruptions, suggesting it acts before the ribosomal protein. This is Nucleolar complex protein 4 (NOC4) from Saccharomyces cerevisiae (strain ATCC 204508 / S288c) (Baker's yeast).